The chain runs to 208 residues: RNA chaperone ProQ (208 aa).

Composition is skewed to basic and acidic residues over residues 99–115 and 126–135; these read AQETLKESKAKVAEKNK and PAKDKPENTA. Positions 99 to 149 are disordered; the sequence is AQETLKESKAKVAEKNKATNKAAAKKAPAKDKPENTAKAKPKTAKKPAKPK. The span at 137 to 149 shows a compositional bias: basic residues; sequence AKPKTAKKPAKPK.

Belongs to the ProQ family.

It is found in the cytoplasm. In terms of biological role, RNA chaperone with significant RNA binding, RNA strand exchange and RNA duplexing activities. This Idiomarina loihiensis (strain ATCC BAA-735 / DSM 15497 / L2-TR) protein is RNA chaperone ProQ.